The following is a 169-amino-acid chain: Menaquinol:cytochrome c reductase iron-sulfur subunit (169 aa).

Residues 62-160 (EPKRFDFKVK…FEVKDGKLYL (99 aa)) form the Rieske domain. [2Fe-2S] cluster-binding residues include Cys-102, His-104, Cys-123, and His-126. A disulfide bond links Cys-107 and Cys-125.

It belongs to the Rieske iron-sulfur protein family. The main subunits of the menaquinol:cytochrome c complex are a Rieske-type iron-sulfur protein (QcrA), a cytochrome b (QcrB) and a cytochrome c (QcrC). It depends on [2Fe-2S] cluster as a cofactor.

Component of the menaquinol:cytochrome c reductase complex. The Rieske protein is a high potential 2Fe-2S protein. The protein is Menaquinol:cytochrome c reductase iron-sulfur subunit (qcrA) of Geobacillus thermodenitrificans.